The chain runs to 100 residues: Competence protein ComGE (100 aa).

A helical membrane pass occupies residues 15–35 (VILLEAVVALAIFASIATLLL).

The transformation pili are flexible filaments, consisting mainly of the major pilin ComGC and smaller amounts of the minor pilins, including at least ComGD, ComGF and ComGG, and perhaps ComGE. Interacts with ComGD. Interacts with ComGF. Interacts with ComGG.

The protein resides in the cell membrane. Its subcellular location is the cell surface. In terms of biological role, required for formation of the type IV-like pilus (T4P) that plays a role in transformation. Transformation pili are dynamically extended and retracted, perhaps thereby promoting DNA uptake and transformation. Involved in transformation. Required for DNA binding. In Streptococcus pneumoniae (strain ATCC BAA-255 / R6), this protein is Competence protein ComGE.